The chain runs to 405 residues: Acetylornithine aminotransferase (405 aa).

Residues 107 to 108 (GA) and Phe-140 contribute to the pyridoxal 5'-phosphate site. Arg-143 contributes to the N(2)-acetyl-L-ornithine binding site. 225-228 (DEVQ) lines the pyridoxal 5'-phosphate pocket. The residue at position 254 (Lys-254) is an N6-(pyridoxal phosphate)lysine. Ser-282 provides a ligand contact to N(2)-acetyl-L-ornithine. Thr-283 lines the pyridoxal 5'-phosphate pocket.

This sequence belongs to the class-III pyridoxal-phosphate-dependent aminotransferase family. ArgD subfamily. Homodimer. Pyridoxal 5'-phosphate is required as a cofactor.

Its subcellular location is the cytoplasm. It carries out the reaction N(2)-acetyl-L-ornithine + 2-oxoglutarate = N-acetyl-L-glutamate 5-semialdehyde + L-glutamate. It participates in amino-acid biosynthesis; L-arginine biosynthesis; N(2)-acetyl-L-ornithine from L-glutamate: step 4/4. The protein is Acetylornithine aminotransferase of Shewanella oneidensis (strain ATCC 700550 / JCM 31522 / CIP 106686 / LMG 19005 / NCIMB 14063 / MR-1).